Here is a 247-residue protein sequence, read N- to C-terminus: Oil body-associated protein 2A (247 aa).

The disordered stretch occupies residues 1–26; that stretch reads MASSDERPGAYPARDGSENLPPGDPK.

This sequence belongs to the OBAP family.

In Arabidopsis thaliana (Mouse-ear cress), this protein is Oil body-associated protein 2A.